Consider the following 523-residue polypeptide: Cytochrome P450 monooxygenase ple1 (523 aa).

The chain crosses the membrane as a helical span at residues 9 to 29; sequence ALPVLAIWAAIGLAYWIDSQK. An N-linked (GlcNAc...) asparagine glycan is attached at N141. Position 444 (C444) interacts with heme.

The protein belongs to the cytochrome P450 family. The cofactor is heme.

It is found in the membrane. Its pathway is secondary metabolite biosynthesis; terpenoid biosynthesis. Functionally, cytochrome P450 monooxygenase; part of the gene cluster that mediates the biosynthesis of pleuromutilin, a tricyclic diterpene showing antibacterial properties. The geranylgeranyl diphosphate (GGPP) synthase ple4 catalyzes the first step in pleuromutilin biosynthesis. GGPP is then substrate of the premutilin synthase (PS) ple3 to yield premutilin. Premutilin synthase is a bifunctional enzyme composed of the fusion of a class II diterpene cyclase (DTC) and a class I diterpene synthase (DTS), with the corresponding domains and active sites containing characteristic aspartate-rich motifs. GGPP is first converted to mutildienyl-diphosphate (MPP) at the class II DTC site. MPP is subsequently further cyclized at the class I DTS site, followed by a 1,5-hydride shift and addition of water prior to terminating deprotonation, to yield premutilin. The cytochrome P450 monooxygenases ple5 and ple6 hydroxylate premutilin at C-11 and C-3, respectively, producing 11-hydroxypremutilin and 3-hydroxypremutilin. The combination of the actions of both ple5 and ple6 leads to the production of 3,11-dihydroxypremutilin. The short chain dehydrogenase ple7 further converts 3,11-dihydroxypremutilin into mutilin. The acetyltransferase ple2 then acetylates mutilin to produce 14-O-acetylmutilin. Finally, the cytochrome P450 monooxygenase ple1 catalyzes hydroxylation on the alpha position of the acetyl side chain of 14-O-acetylmutilin to yield pleuromutilin. The polypeptide is Cytochrome P450 monooxygenase ple1 (Rhodocybe pseudopiperita (Clitopilus pseudopiperitus)).